The sequence spans 382 residues: Carbamoyl phosphate synthase small chain (382 aa).

The segment at 1-187 (MPTPALLVLA…EFRPQTATEE (187 aa)) is CPSase. L-glutamine-binding residues include Ser-47, Gly-239, and Gly-241. The Glutamine amidotransferase type-1 domain maps to 191–377 (TVVAIDFGVK…VAQMRAYRQQ (187 aa)). Cys-267 acts as the Nucleophile in catalysis. L-glutamine contacts are provided by Leu-268, Gln-271, Asn-307, Gly-309, and Phe-310. Active-site residues include His-350 and Glu-352.

Belongs to the CarA family. Composed of two chains; the small (or glutamine) chain promotes the hydrolysis of glutamine to ammonia, which is used by the large (or ammonia) chain to synthesize carbamoyl phosphate. Tetramer of heterodimers (alpha,beta)4.

It catalyses the reaction hydrogencarbonate + L-glutamine + 2 ATP + H2O = carbamoyl phosphate + L-glutamate + 2 ADP + phosphate + 2 H(+). It carries out the reaction L-glutamine + H2O = L-glutamate + NH4(+). It functions in the pathway amino-acid biosynthesis; L-arginine biosynthesis; carbamoyl phosphate from bicarbonate: step 1/1. The protein operates within pyrimidine metabolism; UMP biosynthesis via de novo pathway; (S)-dihydroorotate from bicarbonate: step 1/3. Small subunit of the glutamine-dependent carbamoyl phosphate synthetase (CPSase). CPSase catalyzes the formation of carbamoyl phosphate from the ammonia moiety of glutamine, carbonate, and phosphate donated by ATP, constituting the first step of 2 biosynthetic pathways, one leading to arginine and/or urea and the other to pyrimidine nucleotides. The small subunit (glutamine amidotransferase) binds and cleaves glutamine to supply the large subunit with the substrate ammonia. The protein is Carbamoyl phosphate synthase small chain of Thermosynechococcus vestitus (strain NIES-2133 / IAM M-273 / BP-1).